A 217-amino-acid polypeptide reads, in one-letter code: Phosphatidylserine decarboxylase proenzyme (217 aa).

The Schiff-base intermediate with substrate; via pyruvic acid role is filled by Ser-182. Ser-182 bears the Pyruvic acid (Ser); by autocatalysis mark.

The protein belongs to the phosphatidylserine decarboxylase family. PSD-A subfamily. In terms of assembly, heterodimer of a large membrane-associated beta subunit and a small pyruvoyl-containing alpha subunit. Pyruvate serves as cofactor. Is synthesized initially as an inactive proenzyme. Formation of the active enzyme involves a self-maturation process in which the active site pyruvoyl group is generated from an internal serine residue via an autocatalytic post-translational modification. Two non-identical subunits are generated from the proenzyme in this reaction, and the pyruvate is formed at the N-terminus of the alpha chain, which is derived from the carboxyl end of the proenzyme. The post-translation cleavage follows an unusual pathway, termed non-hydrolytic serinolysis, in which the side chain hydroxyl group of the serine supplies its oxygen atom to form the C-terminus of the beta chain, while the remainder of the serine residue undergoes an oxidative deamination to produce ammonia and the pyruvoyl prosthetic group on the alpha chain.

The protein resides in the cell membrane. It catalyses the reaction a 1,2-diacyl-sn-glycero-3-phospho-L-serine + H(+) = a 1,2-diacyl-sn-glycero-3-phosphoethanolamine + CO2. The protein operates within phospholipid metabolism; phosphatidylethanolamine biosynthesis; phosphatidylethanolamine from CDP-diacylglycerol: step 2/2. In terms of biological role, catalyzes the formation of phosphatidylethanolamine (PtdEtn) from phosphatidylserine (PtdSer). This Prosthecochloris aestuarii (strain DSM 271 / SK 413) protein is Phosphatidylserine decarboxylase proenzyme.